The following is a 388-amino-acid chain: Fibrinogen- and Ig-binding protein (388 aa).

The N-terminal stretch at 1-41 (MSKTNPNKLYSLRKLKTGTASVAVDLTVLGTGLANTTDVKA) is a signal peptide. D repeat units lie at residues 288-293 (EKLEAE), 294-299 (AKALKE), 302-307 (AKQAEE), and 309-314 (AKLKAD). Positions 308–362 (LAKLKADKASGAQKPDTKPGNKEVPTRPSQTRTNTNKAPMAQTKRQLPSTGEETT) are disordered. Basic and acidic residues predominate over residues 322–332 (PDTKPGNKEVP). The segment covering 334 to 362 (RPSQTRTNTNKAPMAQTKRQLPSTGEETT) has biased composition (polar residues). Positions 354–358 (LPSTG) match the LPXTG sorting signal motif. The residue at position 357 (threonine 357) is a Pentaglycyl murein peptidoglycan amidated threonine. Positions 358 to 388 (GEETTNPFFTAAALTVIASAGVLALKRKEEN) are cleaved as a propeptide — removed by sortase.

It localises to the secreted. Its subcellular location is the cell wall. Functionally, binds IgG molecules of the Ig1, Ig2 and Ig4 subclasses, and also binds fibrinogen. The sequence is that of Fibrinogen- and Ig-binding protein (mrp4) from Streptococcus pyogenes.